A 299-amino-acid chain; its full sequence is MKVLCTVLVVTLLAGCRADVEPEPEVLEPAVWKSGQPWELALGRFWDYVRWVQTLSDQVQEELLSSQVTQELTVLMEDTMKAVKAYKSELEQELVPMAEDTKARLSKELQAAQARLGADMEEVRNRLALYRNEMQAMLGQSAEELRARLASHLRKLRKRMLRDAEDLQKRLAVYKDGASEGAERGVSAIRERLGSLVEQSRVRAALTSQPLQERAQAWGKQLRGRLEEVRGQAQDRLEEVREQMEEVRVKIEEQAEAFQARLKGWFEPMVEDMRRQWADLIEKVQAAVGASTPAPTQNP.

Residues 1-18 form the signal peptide; the sequence is MKVLCTVLVVTLLAGCRA. The segment at 74-245 is 8 X 22 AA approximate tandem repeats; sequence VLMEDTMKAV…RLEEVREQME (172 aa). A run of 8 repeats spans residues 75 to 95, 96 to 117, 118 to 139, 140 to 161, 162 to 183, 184 to 206, 207 to 225, and 224 to 242. Met-137 bears the Methionine sulfoxide mark. Ser-141 is subject to Phosphoserine. The tract at residues 152–162 is LDL and other lipoprotein receptors binding; that stretch reads HLRKLRKRMLR. Residue 156–159 coordinates heparin; it reads LRKR. Residues 205-273 are lipid-binding and lipoprotein association; the sequence is ALTSQPLQER…GWFEPMVEDM (69 aa). 219–226 is a heparin binding site; the sequence is GKQLRGRL. The tract at residues 261–273 is specificity for association with VLDL; that stretch reads RLKGWFEPMVEDM.

It belongs to the apolipoprotein A1/A4/E family. In terms of assembly, homotetramer. May interact with ABCA1; functionally associated with ABCA1 in the biogenesis of HDLs. May interact with APP/A4 amyloid-beta peptide; the interaction is extremely stable in vitro but its physiological significance is unclear. May interact with MAPT. May interact with MAP2. In the cerebrospinal fluid, interacts with secreted SORL1. Interacts with PMEL; this allows the loading of PMEL luminal fragment on ILVs to induce fibril nucleation. In terms of processing, APOE exists as multiple glycosylated and sialylated glycoforms within cells and in plasma. The extent of glycosylation and sialylation are tissue and context specific. Post-translationally, glycated in plasma VLDL. Phosphorylated by FAM20C in the extracellular medium.

It is found in the secreted. The protein resides in the extracellular space. The protein localises to the extracellular matrix. It localises to the extracellular vesicle. Its subcellular location is the endosome. It is found in the multivesicular body. Functionally, APOE is an apolipoprotein, a protein associating with lipid particles, that mainly functions in lipoprotein-mediated lipid transport between organs via the plasma and interstitial fluids. APOE is a core component of plasma lipoproteins and is involved in their production, conversion and clearance. Apolipoproteins are amphipathic molecules that interact both with lipids of the lipoprotein particle core and the aqueous environment of the plasma. As such, APOE associates with chylomicrons, chylomicron remnants, very low density lipoproteins (VLDL) and intermediate density lipoproteins (IDL) but shows a preferential binding to high-density lipoproteins (HDL). It also binds a wide range of cellular receptors including the LDL receptor/LDLR, the LDL receptor-related proteins LRP1, LRP2 and LRP8 and the very low-density lipoprotein receptor/VLDLR that mediate the cellular uptake of the APOE-containing lipoprotein particles. Finally, APOE also has a heparin-binding activity and binds heparan-sulfate proteoglycans on the surface of cells, a property that supports the capture and the receptor-mediated uptake of APOE-containing lipoproteins by cells. A main function of APOE is to mediate lipoprotein clearance through the uptake of chylomicrons, VLDLs, and HDLs by hepatocytes. APOE is also involved in the biosynthesis by the liver of VLDLs as well as their uptake by peripheral tissues ensuring the delivery of triglycerides and energy storage in muscle, heart and adipose tissues. By participating in the lipoprotein-mediated distribution of lipids among tissues, APOE plays a critical role in plasma and tissues lipid homeostasis. APOE is also involved in two steps of reverse cholesterol transport, the HDLs-mediated transport of cholesterol from peripheral tissues to the liver, and thereby plays an important role in cholesterol homeostasis. First, it is functionally associated with ABCA1 in the biogenesis of HDLs in tissues. Second, it is enriched in circulating HDLs and mediates their uptake by hepatocytes. APOE also plays an important role in lipid transport in the central nervous system, regulating neuron survival and sprouting. This is Apolipoprotein E (Apoe) from Tympanoctomys barrerae (Plains viscacha rat).